Consider the following 48-residue polypeptide: Ribulose bisphosphate carboxylase large chain (48 aa).

The protein belongs to the RuBisCO large chain family. Type I subfamily. As to quaternary structure, heterohexadecamer of 8 large chains and 8 small chains.

The protein resides in the plastid. It localises to the chloroplast. The catalysed reaction is 2 (2R)-3-phosphoglycerate + 2 H(+) = D-ribulose 1,5-bisphosphate + CO2 + H2O. It carries out the reaction D-ribulose 1,5-bisphosphate + O2 = 2-phosphoglycolate + (2R)-3-phosphoglycerate + 2 H(+). In terms of biological role, ruBisCO catalyzes two reactions: the carboxylation of D-ribulose 1,5-bisphosphate, the primary event in carbon dioxide fixation, as well as the oxidative fragmentation of the pentose substrate in the photorespiration process. Both reactions occur simultaneously and in competition at the same active site. The protein is Ribulose bisphosphate carboxylase large chain (rbcL) of Pinus pinaster (Maritime pine).